The following is a 404-amino-acid chain: L-cysteine:1D-myo-inositol 2-amino-2-deoxy-alpha-D-glucopyranoside ligase (404 aa).

Cys35 is a Zn(2+) binding site. L-cysteinyl-5'-AMP is bound by residues 35–38 (CGIT), Thr50, and 73–75 (NVT). The short motif at 37 to 47 (ITPYDATHLGH) is the 'HIGH' region element. A 'ERGGDP' region motif is present at residues 178-183 (ERGGDP). Trp219 is an L-cysteinyl-5'-AMP binding site. Cys223 provides a ligand contact to Zn(2+). An L-cysteinyl-5'-AMP-binding site is contributed by 241-243 (GND). His248 is a Zn(2+) binding site. L-cysteinyl-5'-AMP is bound at residue Ile275. The 'KMSKS' region motif lies at 281 to 285 (KMSKS).

This sequence belongs to the class-I aminoacyl-tRNA synthetase family. MshC subfamily. As to quaternary structure, monomer. Zn(2+) is required as a cofactor.

It catalyses the reaction 1D-myo-inositol 2-amino-2-deoxy-alpha-D-glucopyranoside + L-cysteine + ATP = 1D-myo-inositol 2-(L-cysteinylamino)-2-deoxy-alpha-D-glucopyranoside + AMP + diphosphate + H(+). In terms of biological role, catalyzes the ATP-dependent condensation of GlcN-Ins and L-cysteine to form L-Cys-GlcN-Ins. This is L-cysteine:1D-myo-inositol 2-amino-2-deoxy-alpha-D-glucopyranoside ligase from Salinispora tropica (strain ATCC BAA-916 / DSM 44818 / JCM 13857 / NBRC 105044 / CNB-440).